The following is a 169-amino-acid chain: Peptide deformylase (169 aa).

Residues Cys-91 and His-133 each contribute to the Fe cation site. Glu-134 is an active-site residue. His-137 is a Fe cation binding site.

Belongs to the polypeptide deformylase family. Requires Fe(2+) as cofactor.

The enzyme catalyses N-terminal N-formyl-L-methionyl-[peptide] + H2O = N-terminal L-methionyl-[peptide] + formate. Functionally, removes the formyl group from the N-terminal Met of newly synthesized proteins. Requires at least a dipeptide for an efficient rate of reaction. N-terminal L-methionine is a prerequisite for activity but the enzyme has broad specificity at other positions. In Hydrogenovibrio crunogenus (strain DSM 25203 / XCL-2) (Thiomicrospira crunogena), this protein is Peptide deformylase.